A 582-amino-acid polypeptide reads, in one-letter code: ATP-dependent lipid A-core flippase (582 aa).

Helical transmembrane passes span 16-36, 63-83, 153-173, 253-273, and 275-295; these read LWPMISPFKTGLIVAAIALIL, ILVWMPLVVIGLMVLRGVSGF, IIGLFAMMFYYSWQLSLILVV, PLIQFIASLALAFVLYAASFP, and VMETLTAGTITVVFSSMIALM. One can recognise an ABC transmembrane type-1 domain in the interval 28–310; that stretch reads IVAAIALILN…LTNVNAQFQR (283 aa). The ABC transporter domain maps to 342–578; sequence IAFDHVTFSY…QGVYAQLHQL (237 aa). ATP is bound at residue 376–383; it reads GRSGSGKS.

It belongs to the ABC transporter superfamily. Lipid exporter (TC 3.A.1.106) family. Homodimer.

Its subcellular location is the cell inner membrane. It catalyses the reaction ATP + H2O + lipid A-core oligosaccharideSide 1 = ADP + phosphate + lipid A-core oligosaccharideSide 2.. Involved in lipopolysaccharide (LPS) biosynthesis. Translocates lipid A-core from the inner to the outer leaflet of the inner membrane. Transmembrane domains (TMD) form a pore in the inner membrane and the ATP-binding domain (NBD) is responsible for energy generation. The polypeptide is ATP-dependent lipid A-core flippase (Sodalis glossinidius (strain morsitans)).